Consider the following 346-residue polypeptide: MNPHAKLICTVSLIMGTSITISSNHWILAWTGLEINTLAIIPLISKSHHPRAIEATIKYFLTQSTASALILFSSMTNAWSTGQWDITQLNHPTSCLMLTMAIAIKLGLVPFHFWFPEVLQGSSLITALLLSTLMKLPPITLLLLTSQSLNTTLLTLLAISSTLIGGWMGLNQTQTRKILAFSSISHLGWMIMIISYNPQLTILTFILYTIMTSTVFLSLAQIKVLKLSTLLISWTKTPMLNATVMLTLLSLAGLPPLTGFMPKWLIIQELTKQEMTPMATIITMLSLLSLFFYLRLAYHSTITLPPNSSNHMKLWRTNKTLNTPTAILTALSTTLLPLSPLIITML.

A run of 10 helical transmembrane segments spans residues 25–45 (HWIL…PLIS), 52–72 (AIEA…LILF), 95–115 (CLML…HFWF), 124–144 (LITA…LLLL), 149–169 (LNTT…GWMG), 178–198 (ILAF…SYNP), 200–220 (LTIL…LSLA), 242–262 (ATVM…GFMP), 274–294 (EMTP…FFYL), and 326–346 (AILT…ITML).

This sequence belongs to the complex I subunit 2 family. As to quaternary structure, core subunit of respiratory chain NADH dehydrogenase (Complex I) which is composed of 45 different subunits.

The protein resides in the mitochondrion inner membrane. It carries out the reaction a ubiquinone + NADH + 5 H(+)(in) = a ubiquinol + NAD(+) + 4 H(+)(out). Functionally, core subunit of the mitochondrial membrane respiratory chain NADH dehydrogenase (Complex I) which catalyzes electron transfer from NADH through the respiratory chain, using ubiquinone as an electron acceptor. Essential for the catalytic activity and assembly of complex I. The polypeptide is NADH-ubiquinone oxidoreductase chain 2 (MT-ND2) (Gallus gallus (Chicken)).